We begin with the raw amino-acid sequence, 115 residues long: MRPFILLALLVSVTVAFNIFRDEVVPEEQLLAVRRTTRDASDSSSDSDEKDDAKTTVTDGSGSGESPAEEQLRRVVRDVDEEASGEGSGAAEVTSVPVRFVRSVDAEGSGSGSDE.

Residues 1–16 form the signal peptide; that stretch reads MRPFILLALLVSVTVA. The disordered stretch occupies residues 33–96; it reads VRRTTRDASD…GSGAAEVTSV (64 aa). O-linked (Xyl...) (chondroitin sulfate) serine glycosylation is found at serine 61, serine 63, serine 84, serine 88, and serine 109.

This chain is Chondroitin proteoglycan 8, found in Caenorhabditis elegans.